The chain runs to 89 residues: Small ribosomal subunit protein uS15 (89 aa).

It belongs to the universal ribosomal protein uS15 family. Part of the 30S ribosomal subunit. Forms a bridge to the 50S subunit in the 70S ribosome, contacting the 23S rRNA.

Functionally, one of the primary rRNA binding proteins, it binds directly to 16S rRNA where it helps nucleate assembly of the platform of the 30S subunit by binding and bridging several RNA helices of the 16S rRNA. In terms of biological role, forms an intersubunit bridge (bridge B4) with the 23S rRNA of the 50S subunit in the ribosome. This Actinobacillus pleuropneumoniae serotype 5b (strain L20) protein is Small ribosomal subunit protein uS15.